The following is a 132-amino-acid chain: Ribosome-binding factor A (132 aa).

Belongs to the RbfA family. As to quaternary structure, monomer. Binds 30S ribosomal subunits, but not 50S ribosomal subunits or 70S ribosomes.

Its subcellular location is the cytoplasm. Its function is as follows. One of several proteins that assist in the late maturation steps of the functional core of the 30S ribosomal subunit. Associates with free 30S ribosomal subunits (but not with 30S subunits that are part of 70S ribosomes or polysomes). Required for efficient processing of 16S rRNA. May interact with the 5'-terminal helix region of 16S rRNA. The polypeptide is Ribosome-binding factor A (Pseudomonas putida (strain W619)).